A 499-amino-acid chain; its full sequence is Dual specificity protein kinase CLK2 (499 aa).

A disordered region spans residues 1–65; that stretch reads MPHPRRYHSS…RSSYDDHSSD (65 aa). Over residues 8–23 the composition is skewed to basic and acidic residues; the sequence is HSSERGSRGSYHEHYQ. Basic residues predominate over residues 24 to 33; the sequence is SRKHKRRRSR. A Phosphoserine; by PKB/AKT1 modification is found at Ser34. Over residues 47 to 65 the composition is skewed to basic and acidic residues; sequence REDSYHVRSRSSYDDHSSD. Residue Ser98 is modified to Phosphoserine; by autocatalysis. Tyr99 bears the Phosphotyrosine; by autocatalysis mark. Residues 102-142 form a disordered region; the sequence is HRENSSYRSQRSSRRKHRRRRRRSRTFSRSSSHSSRRAKSV. The segment covering 112-127 has biased composition (basic residues); the sequence is RSSRRKHRRRRRRSRT. Residue Thr127 is modified to Phosphothreonine; by PKB/AKT1. The residue at position 141 (Ser141) is a Phosphoserine; by autocatalysis. The residue at position 152 (Tyr152) is a Phosphotyrosine. The Protein kinase domain maps to 163–479; the sequence is EIVSTLGEGT…GEALQHPFFA (317 aa). ATP contacts are provided by residues 168-176 and Lys192; that span reads LGEGTFGRV. Asp289 serves as the catalytic Proton acceptor. Residue Thr343 is modified to Phosphothreonine; by PKB/AKT2.

It belongs to the protein kinase superfamily. CMGC Ser/Thr protein kinase family. Lammer subfamily. In terms of assembly, interacts with RBMX and UBL5. Interacts with AKT1. In terms of processing, autophosphorylates on all three types of residues. Phosphorylation on Ser-34 and Thr-127 by AKT1 is induced by ionizing radiation or insulin. Phosphorylation plays a critical role in cell proliferation following low dose radiation and prevents cell death following high dose radiation. Phosphorylation at Thr-343 by PKB/AKT2 induces its kinase activity which is required for its stability. The phosphorylation status at Ser-141 influences its subnuclear localization; inhibition of phosphorylation at Ser-141 results in accumulation in the nuclear speckle.

The protein localises to the nucleus. Its subcellular location is the nucleus speckle. It catalyses the reaction L-seryl-[protein] + ATP = O-phospho-L-seryl-[protein] + ADP + H(+). The enzyme catalyses L-threonyl-[protein] + ATP = O-phospho-L-threonyl-[protein] + ADP + H(+). The catalysed reaction is L-tyrosyl-[protein] + ATP = O-phospho-L-tyrosyl-[protein] + ADP + H(+). Its activity is regulated as follows. 5,6-dichloro-1-b-D-ribofuranosylbenzimidazole (DRB) inhibits autophosphorylation. TG003 inhibits its kinase activity and affects the regulation of alternative splicing mediated by phosphorylation of SR proteins. In terms of biological role, dual specificity kinase acting on both serine/threonine and tyrosine-containing substrates. Phosphorylates serine- and arginine-rich (SR) proteins of the spliceosomal complex. May be a constituent of a network of regulatory mechanisms that enable SR proteins to control RNA splicing and can cause redistribution of SR proteins from speckles to a diffuse nucleoplasmic distribution. Acts as a suppressor of hepatic gluconeogenesis and glucose output by repressing PPARGC1A transcriptional activity on gluconeogenic genes via its phosphorylation. Phosphorylates PPP2R5B thereby stimulating the assembly of PP2A phosphatase with the PPP2R5B-AKT1 complex leading to dephosphorylation of AKT1. Phosphorylates: PTPN1, SRSF1 and SRSF3. Regulates the alternative splicing of tissue factor (F3) pre-mRNA in endothelial cells. Phosphorylates PAGE4 at several serine and threonine residues and this phosphorylation attenuates the ability of PAGE4 to potentiate the transcriptional activator activity of JUN. This Mus musculus (Mouse) protein is Dual specificity protein kinase CLK2 (Clk2).